We begin with the raw amino-acid sequence, 153 residues long: NADPH-dependent 7-cyano-7-deazaguanine reductase (153 aa).

A disordered region spans residues 1 to 30 (MDSIETHAKQLGQQTPLPASPEAAQLDRVP). Cys-51 acts as the Thioimide intermediate in catalysis. Residue Asp-58 is the Proton donor of the active site. Substrate-binding positions include 73-75 (VES) and 92-93 (HE).

This sequence belongs to the GTP cyclohydrolase I family. QueF type 1 subfamily.

It is found in the cytoplasm. It catalyses the reaction 7-aminomethyl-7-carbaguanine + 2 NADP(+) = 7-cyano-7-deazaguanine + 2 NADPH + 3 H(+). It functions in the pathway tRNA modification; tRNA-queuosine biosynthesis. Its function is as follows. Catalyzes the NADPH-dependent reduction of 7-cyano-7-deazaguanine (preQ0) to 7-aminomethyl-7-deazaguanine (preQ1). The polypeptide is NADPH-dependent 7-cyano-7-deazaguanine reductase (Methylorubrum extorquens (strain CM4 / NCIMB 13688) (Methylobacterium extorquens)).